The chain runs to 814 residues: Rap guanine nucleotide exchange factor 5 (814 aa).

The region spanning 43-118 (LQAADLVKDR…DNYVFYQFSS (76 aa)) is the DEP domain. Residues 301-434 (ARYVVVSGTP…ELKEFQKILG (134 aa)) form the N-terminal Ras-GEF domain. The 236-residue stretch at 578-813 (NTWDLALELM…FELSHRLEPR (236 aa)) folds into the Ras-GEF domain.

Its subcellular location is the nucleus. Functionally, guanine nucleotide exchange factor (GEF) for RAP1A, RAP2A and MRAS/M-Ras-GTP. Its association with MRAS inhibits Rap1 activation. The chain is Rap guanine nucleotide exchange factor 5 (Rapgef5) from Mus musculus (Mouse).